Here is a 495-residue protein sequence, read N- to C-terminus: Flagellin (495 aa).

The protein belongs to the bacterial flagellin family.

The protein localises to the secreted. It is found in the bacterial flagellum. Functionally, flagellin is the subunit protein which polymerizes to form the filaments of bacterial flagella. This Salmonella paratyphi A (strain ATCC 9150 / SARB42) protein is Flagellin (fliC).